The primary structure comprises 180 residues: Protein SPMIP9 (180 aa).

In terms of assembly, microtubule inner protein component of sperm flagellar doublet microtubules.

Its subcellular location is the nucleus. It localises to the cytoplasm. The protein resides in the cytoskeleton. It is found in the flagellum axoneme. In terms of biological role, microtubule inner protein (MIP) part of the dynein-decorated doublet microtubules (DMTs) in flagella axoneme. This Bos taurus (Bovine) protein is Protein SPMIP9 (SPMIP9).